The sequence spans 339 residues: Cathepsin L (339 aa).

The signal sequence occupies residues 1–17 (MRTVLVALLALVALTQA). Residues 18–121 (ISPLDLIKEE…ATYIPPAHVT (104 aa)) constitute a propeptide, activation peptide. A glycan (N-linked (GlcNAc...) asparagine) is linked at Asn96. 3 disulfide bridges follow: Cys143–Cys186, Cys177–Cys219, and Cys278–Cys328. Residue Cys146 is part of the active site. The active site involves His285. A propeptide spanning residues 295 to 298 (DESG) is cleaved from the precursor. The active site involves Asn306.

This sequence belongs to the peptidase C1 family. In terms of assembly, dimer of a heavy and a light chain linked by disulfide bonds.

The protein localises to the lysosome. It catalyses the reaction Specificity close to that of papain. As compared to cathepsin B, cathepsin L exhibits higher activity toward protein substrates, but has little activity on Z-Arg-Arg-NHMec, and no peptidyl-dipeptidase activity.. Important for the overall degradation of proteins in lysosomes. Required for differentiation of imaginal disks. This chain is Cathepsin L, found in Sarcophaga peregrina (Flesh fly).